The following is a 410-amino-acid chain: Transcription factor Dp-1 (410 aa).

Lys3 carries the N6-acetyllysine modification. Position 23 is a phosphoserine (Ser23). Positions 73–100 are enriched in polar residues; sequence SNTLVVGSPHTPSTHFASQNQPSDSSPW. The tract at residues 73–116 is disordered; it reads SNTLVVGSPHTPSTHFASQNQPSDSSPWSAGKRNRKGEKNGKGL. Residues 104-116 show a composition bias toward basic residues; that stretch reads KRNRKGEKNGKGL. The segment at 105–127 is interaction with CEBPA; it reads RNRKGEKNGKGLRHFSMKVCEKV. A DNA-binding region spans residues 113 to 195; sequence GKGLRHFSMK…KKEIKWIGLP (83 aa). Residues 161–195 carry the DEF box motif; it reads DQKNIRRRVYDALNVLMAMNIISKEKKEIKWIGLP. Residues 204-277 form a dimerization region; sequence NLEVERQRRL…KKTVIDCSIS (74 aa). Residues 211–327 form an enhances binding of RB protein to E2F region; that stretch reads RRLERIKQKQ…DLKMARSLVP (117 aa). Residues 214 to 246 form a DCB1 region; the sequence is ERIKQKQSQLQELILQQIAFKNLVQRNRHAEQQ. Residues 259–315 form a DCB2 region; that stretch reads LPFIIVNTSKKTVIDCSISNDKFEYLFNFDNTFEIHDDIEVLKRMGMACGLESGSCS. Residues 370–410 form a disordered region; that stretch reads GMLATSSNGSQYSGSRVETPVSYVGEDDEEDDDFNENDEDD. Residues 373-385 show a composition bias toward polar residues; that stretch reads ATSSNGSQYSGSR. Acidic residues predominate over residues 394 to 410; sequence GEDDEEDDDFNENDEDD.

The protein belongs to the E2F/DP family. In terms of assembly, component of the E2F:DP transcription factor complex. Forms heterodimers with E2F family members. The complex can interact with hypophosphorylated retinoblastoma protein RB1 and related proteins (RBL1 and RBL2) that inhibit the E2F transactivation domain. This repression involves recruitment of histone deacetylase (HDAC). During the cell cycle, from mid-to-late G1 phase, RB family members become phosphorylated, detach from the DRTF1/E2F complex to render E2F transcriptionally active. Viral oncoproteins, notably E1A, T-antigen and HPV E7, are capable of sequestering RB protein, thus releasing the active complex. Part of the E2F6.com-1 complex in G0 phase is composed of E2F6, MGA, MAX, TFDP1, CBX3, BAT8, EUHMTASE1, RING1, RNF2, MBLR, L3MBTL2 YAF2. Component of the DREAM complex (also named LINC complex) at least composed of E2F4, E2F5, LIN9, LIN37, LIN52, LIN54, MYBL1, MYBL2, RBL1, RBL2, RBBP4, TFDP1 and TFDP2. The complex exists in quiescent cells where it represses cell cycle-dependent genes. It dissociates in S phase when LIN9, LIN37, LIN52 and LIN54 form a subcomplex that binds to MYBL2. The complex TFDP1:E2F1 interacts with CEBPA; the interaction prevents CEBPA binding to target gene promoters and represses its transcriptional activity. Post-translationally, phosphorylation by E2F1-bound cyclin A-CDK2, in the S phase, inhibits E2F-mediated DNA binding and transactivation. Ubiquitinated by the BCR(KBTBD5) complex, leading to its subsequent degradation. As to expression, highest levels in muscle. Also expressed in brain, placenta, liver and kidney. Lower levels in lung and pancreas. Not detected in heart.

The protein localises to the nucleus. It is found in the cytoplasm. Can stimulate E2F-dependent transcription. Binds DNA cooperatively with E2F family members through the E2 recognition site, 5'-TTTC[CG]CGC-3', found in the promoter region of a number of genes whose products are involved in cell cycle regulation or in DNA replication. The E2F1:DP complex appears to mediate both cell proliferation and apoptosis. Blocks adipocyte differentiation by repressing CEBPA binding to its target gene promoters. The polypeptide is Transcription factor Dp-1 (TFDP1) (Homo sapiens (Human)).